The primary structure comprises 1003 residues: Spheroidin (1003 aa).

N-acetylserine; by host is present on serine 2. Low complexity predominate over residues 953 to 970 (DANSSSSDSCSDSSSSSE). The segment at 953–979 (DANSSSSDSCSDSSSSSESESDSDGCC) is disordered.

May form disulfide-bond-linked aggregates.

Its function is as follows. Major component of viral occlusion bodies, the protective complexes in which the virions are embedded in the cytoplasm of their insect hosts. In Amsacta (AmEPV), this protein is Spheroidin.